A 68-amino-acid polypeptide reads, in one-letter code: UPF0434 protein BURPS668_0926 (68 aa).

This sequence belongs to the UPF0434 family.

The sequence is that of UPF0434 protein BURPS668_0926 from Burkholderia pseudomallei (strain 668).